The following is a 95-amino-acid chain: Acylphosphatase (95 aa).

The Acylphosphatase-like domain maps to 7–95; the sequence is RLTAWVLGTV…PKGEVGFRTR (89 aa). Catalysis depends on residues R22 and N40.

This sequence belongs to the acylphosphatase family.

The enzyme catalyses an acyl phosphate + H2O = a carboxylate + phosphate + H(+). The protein is Acylphosphatase (acyP) of Corynebacterium diphtheriae (strain ATCC 700971 / NCTC 13129 / Biotype gravis).